The primary structure comprises 434 residues: Nicotinate phosphoribosyltransferase (434 aa).

The residue at position 242 (H242) is a Phosphohistidine; by autocatalysis.

It belongs to the NAPRTase family. In terms of processing, transiently phosphorylated on a His residue during the reaction cycle. Phosphorylation strongly increases the affinity for substrates and increases the rate of nicotinate D-ribonucleotide production. Dephosphorylation regenerates the low-affinity form of the enzyme, leading to product release.

The catalysed reaction is nicotinate + 5-phospho-alpha-D-ribose 1-diphosphate + ATP + H2O = nicotinate beta-D-ribonucleotide + ADP + phosphate + diphosphate. Its pathway is cofactor biosynthesis; NAD(+) biosynthesis; nicotinate D-ribonucleotide from nicotinate: step 1/1. In terms of biological role, catalyzes the synthesis of beta-nicotinate D-ribonucleotide from nicotinate and 5-phospho-D-ribose 1-phosphate at the expense of ATP. This is Nicotinate phosphoribosyltransferase from Bartonella quintana (strain Toulouse) (Rochalimaea quintana).